Here is a 365-residue protein sequence, read N- to C-terminus: Pre-mRNA-splicing factor srp2 (365 aa).

RRM domains follow at residues 6–69 (LFVG…RIVV) and 100–166 (LIVE…AVTL). Residues 166–365 (LREDPDAANE…SAEGQVAAEW (200 aa)) form a disordered region. Basic residues predominate over residues 184 to 194 (FRSRSPPARRR). A phosphoserine mark is found at Ser186, Ser188, Ser276, Ser294, Ser296, Ser298, and Ser308. The segment covering 195–307 (YRDDYRRGGD…SPRRDREENR (113 aa)) has biased composition (basic and acidic residues). A compositionally biased stretch (low complexity) spans 316–332 (SYSAAPEASMESSAPTE). Residues 341–353 (EEQQPLQNHSDVG) show a composition bias toward polar residues.

The protein belongs to the splicing factor SR family. In terms of processing, extensively phosphorylated on serine residues in the RS domain.

It is found in the nucleus. Functionally, has a role in pre-mRNA splicing where it is involved in spliceosome assembly. The polypeptide is Pre-mRNA-splicing factor srp2 (srp2) (Schizosaccharomyces pombe (strain 972 / ATCC 24843) (Fission yeast)).